A 364-amino-acid chain; its full sequence is UDP-arabinopyranose mutase 1 (364 aa).

Positions 110–112 (DDD) match the DXD motif motif. Residue Arg-158 is glycosylated (N-linked (Glc...) arginine).

This sequence belongs to the RGP family. Heteromers with UAM2 and UAM3. Requires Mn(2+) as cofactor. Mg(2+) serves as cofactor. Post-translationally, reversibly glycosylated in vitro at Arg-158 by UDP-glucose. Reversibly glycosylated by UDP-xylose and UDP-galactose.

It is found in the golgi apparatus. It catalyses the reaction UDP-beta-L-arabinofuranose = UDP-beta-L-arabinopyranose. UDP-L-arabinose mutase involved in the biosynthesis of cell wall non-cellulosic polysaccharides. Catalyzes the interconvertion of UDP-L-arabinopyranose (UDP-Arap) and UDP-L-arabinofuranose (UDP-Araf). Preferentially catalyzes the formation of UDP-Arap from UDP-Araf. At thermodynamic equilibrium in vitro the ratio of the pyranose form over the furanose form is 90:10. Is probably active as heteromer in vivo. This chain is UDP-arabinopyranose mutase 1, found in Oryza sativa subsp. japonica (Rice).